The chain runs to 102 residues: Glutaredoxin (102 aa).

In terms of domain architecture, Glutaredoxin spans 3–102 (MTKTKELVSS…VPLLTEAGAV (100 aa)). Cys23 and Cys26 form a disulfide bridge.

Belongs to the glutaredoxin family. CPYC subfamily.

It is found in the cytoplasm. Functionally, has a glutathione-disulfide oxidoreductase activity in the presence of NADPH and glutathione reductase. Reduces low molecular weight disulfides and proteins. The protein is Glutaredoxin of Ricinus communis (Castor bean).